Here is a 178-residue protein sequence, read N- to C-terminus: Bifunctional protein PyrR (178 aa).

A PRPP-binding motif is present at residues 99 to 111 (VVLVDDVIYTGRT).

It belongs to the purine/pyrimidine phosphoribosyltransferase family. PyrR subfamily. As to quaternary structure, homodimer and homohexamer; in equilibrium.

It carries out the reaction UMP + diphosphate = 5-phospho-alpha-D-ribose 1-diphosphate + uracil. In terms of biological role, regulates transcriptional attenuation of the pyrimidine nucleotide (pyr) operon by binding in a uridine-dependent manner to specific sites on pyr mRNA. This disrupts an antiterminator hairpin in the RNA and favors formation of a downstream transcription terminator, leading to a reduced expression of downstream genes. Its function is as follows. Also displays a weak uracil phosphoribosyltransferase activity which is not physiologically significant. This Thermoanaerobacter pseudethanolicus (strain ATCC 33223 / 39E) (Clostridium thermohydrosulfuricum) protein is Bifunctional protein PyrR.